The sequence spans 1025 residues: MKFFALFIYRPVATILLSVAITLCGILGFRMLPVAPLPQVDFPVIMVSASLPSASPETMASSVATPLERSLGRIAGVSEMTSSSSLGSTRIILQFDFDRDINGAARDVQAAINAAQSLLPSGMPSRPTYRKANPSDAPIMILTLTSDTYSQGELYDFASTQLAPTISQIDGVGDVDVGGSSLPAVRVGLNPQALFNQGVSLDDVRTAISNANVRKPQGALEDGTHRWQIQTNDELKTAAEYQPLIIHYNNGGAVRLGDVATVTDSVQDVRNAGMTNAKPAILLMIRKLPEANIIQTVDSIRARLPELQSTIPAAIDLQIAQDRSPTIRASLEEVEQTLIISVALVILVVFLFLRSGRATIIPAVAVPVSLIGTFAAMYLCGFSLNNLSLMALTIATGFVVDDAIVVLENIARHLEAGMKPLQAALQGTREVGFTVLSMSLSLVAVFLPLLLMGGLPGRLLREFAVTLSVAIGISLLVSLTLTPMMCGWMLKASKPREQKRLRGFGRVLVALQQGYGKSLKWVLNHTRLVGVVLLGTIALNIWLYISIPKTFFPEQDTGVLMGGIQADQSISFQAMRGKLQDFMKIIRDDPAVDNVTGFTGGSRVNSGMMFITLKPRDERSETAQQIIDRLRVKLAKEPGANLFLMAVQDIRVGGRQANASYQYTLLSDDLPALREWEPKIRKKLATLPELADVNSDQQDNGAEMNLVYDRDTMARLGIDVQAANSLLNNAFGQRQISTIYQPMNQYKVVMEVDPRYTQDISALEKMFVINNEGKAIPLSYFAKWQPANAPLSVNHQGLSAASTISFNLPTGKSLSDASAAIDRAMTQLGVPSTVRGSFAGTAQVFQETMNSQVILIIAAIATVYIVLGILYESYVHPLTILSTLPSAGVGALLALELFNAPFSLIALIGIMLLIGIVKKNAIMMVDFALEAQRHGNLTPQEAIFQACLLRFRPIMMTTLAALFGALPLVLSGGDGSELRQPLGITIVGGLVMSQLLTLYTTPVVYLFFDRLRLRFSRKPKQAVTE.

A run of 12 helical transmembrane segments spans residues 3–23, 333–353, 360–380, 387–407, 431–451, 463–483, 528–548, 853–873, 875–895, 897–917, 953–973, and 984–1004; these read FFALFIYRPVATILLSVAITL, EVEQTLIISVALVILVVFLFL, IIPAVAVPVSLIGTFAAMYLC, LSLMALTIATGFVVDDAIVVL, VGFTVLSMSLSLVAVFLPLLL, FAVTLSVAIGISLLVSLTLTP, LVGVVLLGTIALNIWLYISIP, VILIIAAIATVYIVLGILYES, VHPLTILSTLPSAGVGALLAL, LFNAPFSLIALIGIMLLIGIV, PIMMTTLAALFGALPLVLSGG, and ITIVGGLVMSQLLTLYTTPVV.

This sequence belongs to the resistance-nodulation-cell division (RND) (TC 2.A.6) family. MdtC subfamily. As to quaternary structure, part of a tripartite efflux system composed of MdtA, MdtB and MdtC. MdtC forms a heteromultimer with MdtB.

It is found in the cell inner membrane. In terms of biological role, the MdtABC tripartite complex confers resistance against novobiocin and deoxycholate. The polypeptide is Multidrug resistance protein MdtC (Escherichia coli O7:K1 (strain IAI39 / ExPEC)).